Consider the following 225-residue polypeptide: Late gene expression regulator BDLF4 (225 aa).

The segment at 1–20 is disordered; sequence MSDQGRLSLPRGEGGTDEPN.

It belongs to the herpesviridae UL92 family.

In terms of biological role, part of the viral pre-initiation complex (vPIC) that is responsible for the expression of vPIC-dependent late genes. vPIC is composed of at least BcRF1 that binds the viral TATT box, BDLF3.5, BDLF4, BFRF2, BGLF3, BGLF4 and BVLF1. This Homo sapiens (Human) protein is Late gene expression regulator BDLF4.